The following is a 590-amino-acid chain: Ovarian abundant message protein (590 aa).

Residues Met-1–Gln-71 form a disordered region. A compositionally biased stretch (basic residues) spans Ser-18 to Tyr-29. Tandem repeats lie at residues Pro-66–Gln-71, Pro-72–Arg-77, Pro-78–Gln-83, Pro-84–Gln-89, Pro-90–Gln-95, Pro-96–Gln-101, Pro-102–Gln-107, Pro-108–Gln-113, Pro-114–Gln-119, Pro-120–Gln-125, Pro-126–Gln-131, Pro-132–Gln-137, Pro-138–Gln-143, Pro-144–Gln-149, Pro-150–Gln-155, Pro-156–Gln-161, Pro-162–Gln-167, Pro-168–Gln-173, Pro-174–Gln-179, Pro-180–Gln-185, Pro-300–Pro-305, Pro-306–Pro-311, Pro-312–Leu-317, Pro-318–Pro-323, Pro-324–Pro-329, Pro-330–Pro-335, and Pro-336–Leu-341. The 20 X 6 AA tandem repeats of P-[LP]-V-[EG]-[EG]-[QR] stretch occupies residues Pro-66–Gln-185. Residues Pro-300 to Leu-347 form an 8 X 6 AA approximate tandem repeats of P-L-A-[GV]-[AV]-[PL] region. The 2-8; approximate repeat unit spans residues Pro-342–Leu-347. 16 tandem repeats follow at residues Arg-348–Leu-353, Arg-354–Leu-359, Arg-360–Leu-365, Arg-366–Leu-371, Arg-372–Leu-377, Arg-378–Leu-383, Arg-384–Leu-389, Arg-390–Leu-395, Arg-396–Leu-401, Arg-402–Leu-407, Arg-408–Val-413, Gln-419–Val-424, Gln-425–Val-430, Gln-431–Val-436, Gln-437–Val-442, and Gln-443–Val-448. The interval Arg-348–Val-413 is 11 X 6 AA tandem repeats of approximate R-R-A-[GD]-V-[LV]. Residues Gln-419–Val-454 form a 6 X 6 AA approximate tandem repeats of Q-[QR]-L-A-D-V region. A 4-6; approximate repeat occupies Gln-449–Val-454.

As to expression, somatic ovarian tissue.

The polypeptide is Ovarian abundant message protein (OAM) (Ascaris suum (Pig roundworm)).